Consider the following 137-residue polypeptide: Basic phospholipase A2 homolog W6D49 (137 aa).

Positions 1-16 (MRTLWILAVLLVSVDG) are cleaved as a signal peptide. Disulfide bonds link Cys42-Cys131, Cys44-Cys60, Cys59-Cys111, Cys65-Cys137, Cys66-Cys104, Cys73-Cys97, and Cys91-Cys102. Residues 121–133 (KKQQFNTGIFCSK) form an important for membrane-damaging activities in eukaryotes and bacteria; heparin-binding region.

Monomer. Expressed by the venom gland.

The protein localises to the secreted. With respect to regulation, heparin reduces its edema-inducing activity. Functionally, snake venom phospholipase A2 homolog that lacks enzymatic activity. Shows myotoxin activities and displays edema-inducing activities. A model of myotoxic mechanism has been proposed: an apo Lys49-PLA2 is activated by the entrance of a hydrophobic molecule (e.g. fatty acid) at the hydrophobic channel of the protein leading to a reorientation of a monomer. This reorientation causes a transition between 'inactive' to 'active' states, causing alignment of C-terminal and membrane-docking sites (MDoS) side-by-side and putting the membrane-disruption sites (MDiS) in the same plane, exposed to solvent and in a symmetric position for both monomers. The MDoS region stabilizes the toxin on membrane by the interaction of charged residues with phospholipid head groups. Subsequently, the MDiS region destabilizes the membrane with penetration of hydrophobic residues. This insertion causes a disorganization of the membrane, allowing an uncontrolled influx of ions (i.e. calcium and sodium), and eventually triggering irreversible intracellular alterations and cell death. The protein is Basic phospholipase A2 homolog W6D49 of Calloselasma rhodostoma (Malayan pit viper).